The chain runs to 249 residues: Acidic leucine-rich nuclear phosphoprotein 32 family member A (249 aa).

T15 bears the Phosphothreonine mark. Phosphoserine is present on S17. LRR repeat units lie at residues 18–38 (DVKELVLDNCRSNEGKIEGLT), 43–64 (ELEFLSTINVGLTSVANLPKLN), 65–87 (KLKKLELSDNRISGGLEVLAEKC), and 89–110 (NLTHLNLSGNKIKDLSTIEPLK). The 39-residue stretch at 123–161 (CEVTNLNDYRENVFKLLPQLTYLDGYDRDDKEAPDSDAE) folds into the LRRCT domain. Basic and acidic residues predominate over residues 147 to 156 (GYDRDDKEAP). Residues 147 to 249 (GYDRDDKEAP…EPEDEGEDDD (103 aa)) are disordered. Residues 150–174 (RDDKEAPDSDAEGYVEGLDDDEEDE) are necessary for tumor-suppressive function. A compositionally biased stretch (acidic residues) spans 157 to 230 (DSDAEGYVEG…DEEDEEELGE (74 aa)). Phosphoserine occurs at positions 158 and 204. The interval 165-249 (EGLDDDEEDE…EPEDEGEDDD (85 aa)) is interaction with E4F1.

The protein belongs to the ANP32 family. In terms of assembly, component of the SET complex, composed of at least ANP32A, APEX1, HMGB2, NME1, SET and TREX1. Directly interacts with SET. Interacts with ATXN1/SCA1. Interacts with MAP1B. Interacts with ELAVL1. Part of the INHAT (inhibitor of histone acetyltransferases) complex. Interacts with E4F1. Post-translationally, the N-terminus is blocked. In terms of processing, phosphorylated on serine residues, at least in part by casein kinase 2/CK2. Some glutamate residues are glycylated by TTLL8. This modification occurs exclusively on glutamate residues and results in a glycine chain on the gamma-carboxyl group. Widely distributed in the central nervous system, with an abundant expression in the cerebellum.

The protein resides in the nucleus. It localises to the cytoplasm. It is found in the endoplasmic reticulum. Functionally, multifunctional protein that is involved in the regulation of many processes including tumor suppression, apoptosis, cell cycle progression or transcription. Promotes apoptosis by favouring the activation of caspase-9/CASP9 and allowing apoptosome formation. In addition, plays a role in the modulation of histone acetylation and transcription as part of the INHAT (inhibitor of histone acetyltransferases) complex. Inhibits the histone-acetyltranferase activity of EP300/CREBBP (CREB-binding protein) and EP300/CREBBP-associated factor by histone masking. Preferentially binds to unmodified histone H3 and sterically inhibiting its acetylation and phosphorylation leading to cell growth inhibition. Participates in other biochemical processes such as regulation of mRNA nuclear-to-cytoplasmic translocation and stability by its association with ELAVL1 (Hu-antigen R). Plays a role in E4F1-mediated transcriptional repression as well as inhibition of protein phosphatase 2A. In Bos taurus (Bovine), this protein is Acidic leucine-rich nuclear phosphoprotein 32 family member A (ANP32A).